The sequence spans 315 residues: 7,8-didemethyl-8-hydroxy-5-deazariboflavin synthase (315 aa).

One can recognise a Radical SAM core domain in the interval 6 to 237; the sequence is ITYSPAFTLV…EDITIQIPAN (232 aa). The [4Fe-4S] cluster site is built by cysteine 20, cysteine 24, and cysteine 27.

The protein belongs to the radical SAM superfamily. CofG family. In terms of assembly, consists of two subunits, CofG and CofH. It depends on [4Fe-4S] cluster as a cofactor.

The enzyme catalyses 5-amino-5-(4-hydroxybenzyl)-6-(D-ribitylimino)-5,6-dihydrouracil + S-adenosyl-L-methionine = 7,8-didemethyl-8-hydroxy-5-deazariboflavin + 5'-deoxyadenosine + L-methionine + NH4(+) + H(+). It participates in cofactor biosynthesis; coenzyme F0 biosynthesis. Catalyzes the radical-mediated synthesis of 7,8-didemethyl-8-hydroxy-5-deazariboflavin from 5-amino-5-(4-hydroxybenzyl)-6-(D-ribitylimino)-5,6-dihydrouracil. This Thermosynechococcus vestitus (strain NIES-2133 / IAM M-273 / BP-1) protein is 7,8-didemethyl-8-hydroxy-5-deazariboflavin synthase.